The following is a 253-amino-acid chain: uncharacterized protein (253 aa).

10–35 is an NADP(+) binding site; sequence ISGAASKRGIGRATAELFASHGARVA. Ser-144 contributes to the substrate binding site. Tyr-159 serves as the catalytic Proton acceptor.

Belongs to the short-chain dehydrogenases/reductases (SDR) family.

This is an uncharacterized protein from Sinorhizobium fredii (strain NBRC 101917 / NGR234).